Reading from the N-terminus, the 339-residue chain is Serine/arginine-rich splicing factor 6 (339 aa).

An RRM 1 domain is found at 2–72 (PRVYIGRLSY…ERVIVEHARG (71 aa)). 3 positions are modified to phosphoserine: serine 45, serine 81, and serine 84. Residues 75-103 (RDRDGYSYGSRSGGGGYSSRRTSGRDKYG) form a disordered region. The 74-residue stretch at 110–183 (YRLIVENLSS…RNIRLIEDKP (74 aa)) folds into the RRM 2 domain. At lysine 165 the chain carries N6-acetyllysine. Positions 176-339 (IRLIEDKPRT…RSRSRSSSRD (164 aa)) are disordered. Residue lysine 182 forms a Glycyl lysine isopeptide (Lys-Gly) (interchain with G-Cter in SUMO2) linkage. Residues 185-250 (TSHRRSYSGS…RKSRSKSKSK (66 aa)) are compositionally biased toward basic residues. The span at 280-291 (SPKENGKGDIKS) shows a compositional bias: basic and acidic residues. Phosphoserine occurs at positions 297 and 299. Serine 303 is modified (phosphoserine; by DYRK1A). A phosphoserine mark is found at serine 314 and serine 316. Positions 321–339 (RASRSRSRSRSRSRSSSRD) are enriched in basic residues.

Belongs to the splicing factor SR family. Binds SREK1/SFRS12. Interacts with DYRK1A. Interacts with RBMY; the interaction inhibits SRSF6 pre-mRNA splicing. Post-translationally, extensively phosphorylated on serine residues in the RS domain. Phosphorylated by DYRK1A, probably in the RS domain. Phosphorylation by DYRK1A modulates alternative splice site selection and inhibits the expression of MAPT/Tau exon 10.

Its subcellular location is the nucleus. The protein localises to the nucleus speckle. Plays a role in constitutive splicing and modulates the selection of alternative splice sites. Plays a role in the alternative splicing of MAPT/Tau exon 10. Binds to alternative exons of TNC pre-mRNA and promotes the expression of alternatively spliced TNC. Plays a role in wound healing and in the regulation of keratinocyte differentiation and proliferation via its role in alternative splicing. The chain is Serine/arginine-rich splicing factor 6 (Srsf6) from Mus musculus (Mouse).